The primary structure comprises 282 residues: Undecaprenyl-diphosphatase (282 aa).

5 consecutive transmembrane segments (helical) span residues 96–116 (WMVI…KDII), 123–143 (MWIT…AEKW), 198–218 (FLLA…DAFA), 229–249 (QLAV…AWLL), and 260–280 (FAAY…TGML).

It belongs to the UppP family.

The protein localises to the cell membrane. It catalyses the reaction di-trans,octa-cis-undecaprenyl diphosphate + H2O = di-trans,octa-cis-undecaprenyl phosphate + phosphate + H(+). Its function is as follows. Catalyzes the dephosphorylation of undecaprenyl diphosphate (UPP). Confers resistance to bacitracin. The polypeptide is Undecaprenyl-diphosphatase (Corynebacterium diphtheriae (strain ATCC 700971 / NCTC 13129 / Biotype gravis)).